Reading from the N-terminus, the 310-residue chain is Porphobilinogen deaminase (310 aa).

S-(dipyrrolylmethanemethyl)cysteine is present on Cys-241.

This sequence belongs to the HMBS family. In terms of assembly, monomer. Requires dipyrromethane as cofactor.

The catalysed reaction is 4 porphobilinogen + H2O = hydroxymethylbilane + 4 NH4(+). Its pathway is porphyrin-containing compound metabolism; protoporphyrin-IX biosynthesis; coproporphyrinogen-III from 5-aminolevulinate: step 2/4. Functionally, tetrapolymerization of the monopyrrole PBG into the hydroxymethylbilane pre-uroporphyrinogen in several discrete steps. The protein is Porphobilinogen deaminase of Lysinibacillus sphaericus (strain C3-41).